The primary structure comprises 187 residues: Large ribosomal subunit protein uL10 (187 aa).

It belongs to the universal ribosomal protein uL10 family. Part of the ribosomal stalk of the 50S ribosomal subunit. The N-terminus interacts with L11 and the large rRNA to form the base of the stalk. The C-terminus forms an elongated spine to which L12 dimers bind in a sequential fashion forming a multimeric L10(L12)X complex.

Forms part of the ribosomal stalk, playing a central role in the interaction of the ribosome with GTP-bound translation factors. This Roseiflexus castenholzii (strain DSM 13941 / HLO8) protein is Large ribosomal subunit protein uL10.